We begin with the raw amino-acid sequence, 93 residues long: Putative regulatory protein Cthe_1316 (93 aa).

The segment at 74–93 (RLNTKEAEDVEVDDEEEIDE) is disordered. Residues 81-93 (EDVEVDDEEEIDE) are compositionally biased toward acidic residues.

It belongs to the RemA family.

This chain is Putative regulatory protein Cthe_1316, found in Acetivibrio thermocellus (strain ATCC 27405 / DSM 1237 / JCM 9322 / NBRC 103400 / NCIMB 10682 / NRRL B-4536 / VPI 7372) (Clostridium thermocellum).